A 117-amino-acid chain; its full sequence is Protein RALF-like 32 (117 aa).

The signal sequence occupies residues 1–26 (MEIKPSRIFSTITIFFLCLLLAHVTS). Residues 27-64 (KASSSSLCNGSVAECSSMVETEEMSVIMESWSSQRLTE) constitute a propeptide, removed in mature form. Asn-35 carries N-linked (GlcNAc...) asparagine glycosylation. The interval 77 to 107 (RNQPACDGGKRGESYSTQCLPPPSNPYSRGC) is disordered. 2 disulfides stabilise this stretch: Cys-82-Cys-95 and Cys-107-Cys-113.

This sequence belongs to the plant rapid alkalinization factor (RALF) family. Post-translationally, proteolytically cleaved, probably by S1P, a subtilisin-like serine protease (subtilase).

It is found in the secreted. Its function is as follows. Cell signaling peptide that may regulate plant stress, growth, and development. Mediates a rapid alkalinization of extracellular space by mediating a transient increase in the cytoplasmic Ca(2+) concentration leading to a calcium-dependent signaling events through a cell surface receptor and a concomitant activation of some intracellular mitogen-activated protein kinases. In Arabidopsis thaliana (Mouse-ear cress), this protein is Protein RALF-like 32 (RALFL32).